The primary structure comprises 334 residues: Small ribosomal subunit protein uS2 (334 aa).

Belongs to the universal ribosomal protein uS2 family.

The protein is Small ribosomal subunit protein uS2 of Rhodopseudomonas palustris (strain BisB18).